The chain runs to 101 residues: C-X-C motif chemokine 3 (101 aa).

The N-terminal stretch at 1–32 (MAPPTRRLLNAALLLLLLLMATSHQPSGTVVA) is a signal peptide. 2 disulfides stabilise this stretch: Cys-37/Cys-63 and Cys-39/Cys-79.

This sequence belongs to the intercrine alpha (chemokine CxC) family.

It localises to the secreted. Its function is as follows. Ligand for CXCR2. Has chemotactic activity for neutrophils. May play a role in inflammation and exert its effects on endothelial cells in an autocrine fashion. This is C-X-C motif chemokine 3 (Cxcl3) from Rattus norvegicus (Rat).